A 379-amino-acid polypeptide reads, in one-letter code: Pectin lyase A (379 aa).

Positions 1–20 (MKTTFLVSLATAALSSTAAA) are cleaved as a signal peptide. Intrachain disulfides connect C83/C102 and C92/C226. Residue R256 is part of the active site. A disulfide bond links C323 and C331.

The protein belongs to the polysaccharide lyase 1 family.

The protein resides in the secreted. It catalyses the reaction Eliminative cleavage of (1-&gt;4)-alpha-D-galacturonan methyl ester to give oligosaccharides with 4-deoxy-6-O-methyl-alpha-D-galact-4-enuronosyl groups at their non-reducing ends.. Its function is as follows. Pectinolytic enzymes consist of four classes of enzymes: pectin lyase, polygalacturonase, pectin methylesterase and rhamnogalacturonase. Among pectinolytic enzymes, pectin lyase is the most important in depolymerization of pectin, since it cleaves internal glycosidic bonds of highly methylated pectins. In Emericella nidulans (strain FGSC A4 / ATCC 38163 / CBS 112.46 / NRRL 194 / M139) (Aspergillus nidulans), this protein is Pectin lyase A (pelA).